The primary structure comprises 255 residues: Putative ankyrin repeat protein R880 (255 aa).

5 ANK repeats span residues 79-109, 110-139, 141-169, 171-199, and 201-229; these read SGIN…DIHY, KTDY…NINT, DCYA…NVRK, RDLA…DVRS, and KNYA…NFRV.

In Acanthamoeba polyphaga (Amoeba), this protein is Putative ankyrin repeat protein R880.